Here is a 389-residue protein sequence, read N- to C-terminus: Tyrosine aminotransferase (389 aa).

Lys242 is subject to N6-(pyridoxal phosphate)lysine.

This sequence belongs to the class-I pyridoxal-phosphate-dependent aminotransferase family. Homodimer. It depends on pyridoxal 5'-phosphate as a cofactor.

The catalysed reaction is L-tyrosine + 2-oxoglutarate = 3-(4-hydroxyphenyl)pyruvate + L-glutamate. Its pathway is amino-acid degradation; L-phenylalanine degradation; acetoacetate and fumarate from L-phenylalanine: step 2/6. In terms of biological role, transaminase involved in tyrosine breakdown. Converts tyrosine to p-hydroxyphenylpyruvate. This Rhizobium meliloti (strain 1021) (Ensifer meliloti) protein is Tyrosine aminotransferase (tatA).